The chain runs to 180 residues: ATP-dependent protease subunit HslV (180 aa).

Residue Thr-8 is part of the active site. Na(+)-binding residues include Gly-165, Asp-168, and Thr-171.

Belongs to the peptidase T1B family. HslV subfamily. In terms of assembly, a double ring-shaped homohexamer of HslV is capped on each side by a ring-shaped HslU homohexamer. The assembly of the HslU/HslV complex is dependent on binding of ATP.

Its subcellular location is the cytoplasm. It catalyses the reaction ATP-dependent cleavage of peptide bonds with broad specificity.. Allosterically activated by HslU binding. Its function is as follows. Protease subunit of a proteasome-like degradation complex believed to be a general protein degrading machinery. The polypeptide is ATP-dependent protease subunit HslV (Lactiplantibacillus plantarum (strain ATCC BAA-793 / NCIMB 8826 / WCFS1) (Lactobacillus plantarum)).